The sequence spans 237 residues: Alpha-S1-casein (237 aa).

Residues 1–15 form the signal peptide; it reads MKLLIFSCLVTLALA. The interval 39-60 is disordered; the sequence is EDPIPVSEASSSEESVHQLNRD. 3 positions are modified to phosphoserine: S79, S80, and S81.

Belongs to the alpha-casein family. Mammary gland specific. Secreted in milk.

Its subcellular location is the secreted. In terms of biological role, important role in the capacity of milk to transport calcium phosphate. The protein is Alpha-S1-casein (CSN1S1) of Notamacropus eugenii (Tammar wallaby).